A 236-amino-acid polypeptide reads, in one-letter code: uncharacterized protein (236 aa).

An ABC transporter domain is found at 4–225 (LLEASIEQAG…TGLEGQSLLD (222 aa)). 38 to 45 (GANGAGKS) contacts ATP.

It belongs to the ABC transporter superfamily.

This is an uncharacterized protein from Bacillus subtilis (strain 168).